Here is a 595-residue protein sequence, read N- to C-terminus: Estrogen receptor (595 aa).

A modulating (transactivation AF-1); mediates interaction with MACROD1 region spans residues 1-184 (MTMTLHTKAS…AMESAKETRY (184 aa)). An O-linked (GlcNAc) serine glycan is attached at Ser-10. Residues 35 to 47 (LERPLGEVYVDSS) are required for interaction with NCOA1. The interaction with DDX5; self-association stretch occupies residues 35–174 (LERPLGEVYV…LASTSDKGSM (140 aa)). Residues Ser-104 and Ser-106 each carry the phosphoserine; by CDK2 modification. Residue Ser-118 is modified to Phosphoserine. The tract at residues 144-174 (AGPPAFYRPNSDNRRQGGRERLASTSDKGSM) is disordered. A compositionally biased stretch (basic and acidic residues) spans 154–165 (SDNRRQGGRERL). Ser-167 is modified (phosphoserine; by CK2). 2 consecutive NR C4-type zinc fingers follow at residues 185 to 205 (CAVC…CEGC) and 221 to 245 (CPAT…LRKC). The nuclear receptor DNA-binding region spans 185-250 (CAVCNDYASG…RLRKCYEVGM (66 aa)). The mediates interaction with DNTTIP2 stretch occupies residues 185–310 (CAVCNDYASG…TKKNSPVLSL (126 aa)). The hinge stretch occupies residues 251-310 (MKGGIRKDRRGGRMLKHKRQRDDGEGRNEAVPPGDMRSANLWPSPLLIKHTKKNSPVLSL). Positions 257-269 (KDRRGGRMLKHKR) are enriched in basic residues. The disordered stretch occupies residues 257 to 288 (KDRRGGRMLKHKRQRDDGEGRNEAVPPGDMRS). Arg-260 is modified (asymmetric dimethylarginine; by PRMT1). The interaction with AKAP13 stretch occupies residues 262–595 (GRMLKHKRQR…GEAENFPTTI (334 aa)). A self-association region spans residues 264–594 (MLKHKRQRDD…TGEAENFPTT (331 aa)). The region spanning 311 to 547 (TADQMISALL…DLLLEMLDAH (237 aa)) is the NR LBD domain. The tract at residues 311–594 (TADQMISALL…TGEAENFPTT (284 aa)) is transactivation AF-2. Glu-353 and Arg-394 together coordinate 17beta-estradiol. Cys-447 carries S-palmitoyl cysteine lipidation. His-524 provides a ligand contact to 17beta-estradiol. Phosphotyrosine; by Tyr-kinases is present on Tyr-537. The segment at 551–575 (APTNLGGPPPEDMSQSQLATSGSTP) is disordered. A compositionally biased stretch (polar residues) spans 563–575 (MSQSQLATSGSTP).

It belongs to the nuclear hormone receptor family. NR3 subfamily. In terms of assembly, binds DNA as a homodimer. Can form a heterodimer with ESR2. Interacts with coactivator NCOA5. Interacts with PELP1, the interaction is enhanced by 17-beta-estradiol; the interaction increases ESR1 transcriptional activity. Interacts with NCOA7; the interaction is ligand-inducible. Interacts with AKAP13, CUEDC2, HEXIM1, KDM5A, MAP1S, SMARD1, and UBE1C. Interacts with MUC1; the interaction is stimulated by 7 beta-estradiol (E2) and enhances ESR1-mediated transcription. Interacts with DNTTIP2, and UIMC1. Interacts with KMT2D/MLL2. Interacts with ATAD2; the interaction is enhanced by estradiol. Interacts with KIF18A and LDB1. Interacts with RLIM (via its C-terminus). Interacts with MACROD1. Interacts with SH2D4A and PLCG. Interacts with SH2D4A; the interaction blocks binding to PLCG and inhibits estrogen-induced cell proliferation. Interacts with DYNLL1. Interacts with CCDC62; the interaction requires estradiol and appears to enhance the transcription of target genes. Interacts with NR2C1; the interaction prevents homodimerization of ESR1 and suppresses its transcriptional activity and cell growth. Interacts with DNAAF4. Interacts with PRMT2. Interacts with RBFOX2. Interacts with EP300; the interaction is estrogen-dependent and enhanced by CITED1. Interacts with CITED1; the interaction is estrogen-dependent. Interacts with FAM120B, FOXL2, PHB2 and SLC30A9. Interacts with coactivators NCOA3 and NCOA6. Interacts with STK3/MST2 only in the presence of SAV1 and vice-versa. Binds to CSNK1D. Interacts with NCOA2; NCOA2 can interact with ESR1 AF-1 and AF-2 domains simultaneously and mediate their transcriptional synergy. Interacts with DDX5. Interacts with NCOA1; the interaction seems to require a self-association of N-terminal and C-terminal regions. Interacts with ZNF366, DDX17, NFKB1, RELA, SP1 and SP3. Interacts with NRIP1. Interacts with GPER1; the interaction occurs in an estrogen-dependent manner. Interacts with CLOCK and the interaction is stimulated by estrogen. Interacts with TRIP4 (ufmylated); estrogen dependent. Interacts with LMTK3; the interaction phosphorylates ESR1 (in vitro) and protects it against proteasomal degradation. Interacts with CCAR2 (via N-terminus) in a ligand-independent manner. Interacts with ZFHX3. Interacts with SFR1 in a ligand-dependent and -independent manner. Interacts with DCAF13, LATS1 and DCAF1; regulates ESR1 ubiquitination and ubiquitin-mediated proteasomal degradation. Interacts (via DNA-binding domain) with POU4F2 (C-terminus); this interaction increases the estrogen receptor ESR1 transcriptional activity in a DNA- and ligand 17-beta-estradiol-independent manner. Interacts with ESRRB isoform 1. Interacts with UBE3A and WBP2. Interacts with GTF2B. Interacts with RBM39. In the absence of hormonal ligand, interacts with TACC1. Interacts with PI3KR1 or PI3KR2 and PTK2/FAK1. Interacts with SRC. Interacts with BAG1; the interaction is promoted in the absence of estradiol (17-beta-estradiol/E2). Interacts with and ubiquitinated by STUB1; the interaction is promoted in the absence of estradiol (17-beta-estradiol/E2). Interacts with NEDD8. In terms of processing, phosphorylated by cyclin A/CDK2 and CK1. Phosphorylation probably enhances transcriptional activity. Dephosphorylation at Ser-118 by PPP5C inhibits its transactivation activity. Phosphorylated by LMTK3 (in vitro). Ubiquitinated; regulated by LATS1 via DCAF1 it leads to ESR1 proteasomal degradation. Deubiquitinated by OTUB1. Ubiquitinated by STUB1/CHIP; in the CA1 hippocampal region following loss of endogenous circulating estradiol (17-beta-estradiol/E2). Ubiquitinated by UBR5, leading to its degradation: UBR5 specifically recognizes and binds ligand-bound ESR1 when it is not associated with coactivators (NCOAs). In presence of NCOAs, the UBR5-degron is not accessible, preventing its ubiquitination and degradation. Post-translationally, palmitoylated at Cys-447 by ZDHHC7 and ZDHHC21. Palmitoylation is required for plasma membrane targeting and for rapid intracellular signaling via ERK and AKT kinases and cAMP generation, but not for signaling mediated by the nuclear hormone receptor. In terms of processing, dimethylated by PRMT1 at Arg-260. The methylation may favor cytoplasmic localization. Demethylated by JMJD6 at Arg-260.

Its subcellular location is the nucleus. It is found in the cytoplasm. The protein resides in the golgi apparatus. It localises to the cell membrane. In terms of biological role, nuclear hormone receptor. The steroid hormones and their receptors are involved in the regulation of eukaryotic gene expression and affect cellular proliferation and differentiation in target tissues. Ligand-dependent nuclear transactivation involves either direct homodimer binding to a palindromic estrogen response element (ERE) sequence or association with other DNA-binding transcription factors, such as AP-1/c-Jun, c-Fos, ATF-2, Sp1 and Sp3, to mediate ERE-independent signaling. Ligand binding induces a conformational change allowing subsequent or combinatorial association with multiprotein coactivator complexes through LXXLL motifs of their respective components. Mutual transrepression occurs between the estrogen receptor (ER) and NF-kappa-B in a cell-type specific manner. Decreases NF-kappa-B DNA-binding activity and inhibits NF-kappa-B-mediated transcription from the IL6 promoter and displace RELA/p65 and associated coregulators from the promoter. Recruited to the NF-kappa-B response element of the CCL2 and IL8 promoters and can displace CREBBP. Present with NF-kappa-B components RELA/p65 and NFKB1/p50 on ERE sequences. Can also act synergistically with NF-kappa-B to activate transcription involving respective recruitment adjacent response elements; the function involves CREBBP. Can activate the transcriptional activity of TFF1. Also mediates membrane-initiated estrogen signaling involving various kinase cascades. Essential for MTA1-mediated transcriptional regulation of BRCA1 and BCAS3. Maintains neuronal survival in response to ischemic reperfusion injury when in the presence of circulating estradiol (17-beta-estradiol/E2). This is Estrogen receptor (ESR1) from Sus scrofa (Pig).